The sequence spans 336 residues: Galactinol synthase 6 (336 aa).

The active site involves Lys-106. 3 residues coordinate Mn(2+): Asp-122, Asp-124, and His-260.

It belongs to the glycosyltransferase 8 family. Galactosyltransferase subfamily. It depends on a divalent metal cation as a cofactor.

It is found in the cytoplasm. It carries out the reaction myo-inositol + UDP-alpha-D-galactose = alpha-D-galactosyl-(1-&gt;3)-1D-myo-inositol + UDP + H(+). Functionally, galactinol synthase involved in the biosynthesis of raffinose family oligosaccharides (RFOs) that function as osmoprotectants. May promote plant stress tolerance. The protein is Galactinol synthase 6 (GOLS6) of Arabidopsis thaliana (Mouse-ear cress).